The sequence spans 266 residues: Thymidylate synthase (266 aa).

R24 serves as a coordination point for dUMP. H54 contacts (6R)-5,10-methylene-5,6,7,8-tetrahydrofolate. 129–130 (RR) lines the dUMP pocket. The active-site Nucleophile is the C149. DUMP is bound by residues 169-172 (RSAD), N180, and 210-212 (HIY). D172 serves as a coordination point for (6R)-5,10-methylene-5,6,7,8-tetrahydrofolate. (6R)-5,10-methylene-5,6,7,8-tetrahydrofolate is bound at residue A265.

This sequence belongs to the thymidylate synthase family. Bacterial-type ThyA subfamily. In terms of assembly, homodimer.

The protein resides in the cytoplasm. It catalyses the reaction dUMP + (6R)-5,10-methylene-5,6,7,8-tetrahydrofolate = 7,8-dihydrofolate + dTMP. The protein operates within pyrimidine metabolism; dTTP biosynthesis. Its function is as follows. Catalyzes the reductive methylation of 2'-deoxyuridine-5'-monophosphate (dUMP) to 2'-deoxythymidine-5'-monophosphate (dTMP) while utilizing 5,10-methylenetetrahydrofolate (mTHF) as the methyl donor and reductant in the reaction, yielding dihydrofolate (DHF) as a by-product. This enzymatic reaction provides an intracellular de novo source of dTMP, an essential precursor for DNA biosynthesis. The polypeptide is Thymidylate synthase (Corynebacterium glutamicum (strain R)).